The primary structure comprises 174 residues: uncharacterized protein (174 aa).

This sequence belongs to the mimivirus L39/R874 family.

This is an uncharacterized protein from Acanthamoeba polyphaga (Amoeba).